A 303-amino-acid polypeptide reads, in one-letter code: Major fimbrium anchoring subunit FimB (303 aa).

The first 22 residues, 1–22 (MNDAKKYIVSVLILLVAGMFGG), serve as a signal peptide directing secretion. Residue Cys-23 is the site of N-palmitoyl cysteine attachment. The S-diacylglycerol cysteine moiety is linked to residue Cys-23.

This sequence belongs to the bacteroidetes fimbrillin superfamily. FimB/Mfa2 family. As to quaternary structure, fimB is not part of the fimbrium itself, but anchors the fimbrium in the outer membrane. Linear, head-to-tail oligomerization of fimbrial subunits mediates assembly of the fimbrium stalk, while the minor components FimC, FimD and FimE probably form the fimbrium tip. The anchoring subunit FimB limits fimbrium length and is important for solid fimbrium attachment to the outer membrane. In its absence, the major fimbriae become very long and are easily detached from the membrane.

It localises to the cell outer membrane. In terms of biological role, anchoring subunit of the major fimbriae. Regulates fimbrial length. These filamentous pili are attached to the cell surface; they mediate biofilm formation, adhesion onto host cells and onto other bacteria that are part of the oral microbiome. Fimbriae of P.gingivalis are major virulence factors. The polypeptide is Major fimbrium anchoring subunit FimB (Porphyromonas gingivalis (strain ATCC BAA-308 / W83)).